The sequence spans 86 residues: MAVVIRLRREGKKGRPQYRIVVADKRCPTNGKYIEEVGFYDPMVEAPQGYRLKLQRVSYWLKQGAKPTETVDQIIKKVSKLETKDN.

It belongs to the bacterial ribosomal protein bS16 family.

The chain is Small ribosomal subunit protein bS16 from Methylacidiphilum infernorum (isolate V4) (Methylokorus infernorum (strain V4)).